The primary structure comprises 357 residues: Serine/threonine-protein kinase nekl-2 (357 aa).

The region spanning 4–267 is the Protein kinase domain; it reads YEKVRVVGRG…VSQLLSDPLV (264 aa). ATP-binding positions include 10–18 and lysine 35; that span reads VGRGAFGVC. The Proton acceptor role is filled by aspartate 137. Residues 281-290 are compositionally biased toward basic and acidic residues; the sequence is IEPPPTDKRK. Residues 281–357 are disordered; the sequence is IEPPPTDKRK…QSRSQVHSKY (77 aa). 2 stretches are compositionally biased toward polar residues: residues 293 to 327 and 336 to 357; these read ASLS…QLTP and FFSS…HSKY.

This sequence belongs to the protein kinase superfamily. NEK Ser/Thr protein kinase family. NIMA subfamily. It depends on Mg(2+) as a cofactor. Expressed in hypodermal cells including in hyp7 syncytium but not in seam cells.

It is found in the cytoplasm. The enzyme catalyses L-seryl-[protein] + ATP = O-phospho-L-seryl-[protein] + ADP + H(+). The catalysed reaction is L-threonyl-[protein] + ATP = O-phospho-L-threonyl-[protein] + ADP + H(+). Probable serine/threonine-protein kinase required for the completion of molting. May play a role in endocytosis in the hypodermis syncytium. This chain is Serine/threonine-protein kinase nekl-2, found in Caenorhabditis elegans.